We begin with the raw amino-acid sequence, 83 residues long: Cell division topological specificity factor (83 aa).

It belongs to the MinE family.

In terms of biological role, prevents the cell division inhibition by proteins MinC and MinD at internal division sites while permitting inhibition at polar sites. This ensures cell division at the proper site by restricting the formation of a division septum at the midpoint of the long axis of the cell. The sequence is that of Cell division topological specificity factor from Buchnera aphidicola subsp. Baizongia pistaciae (strain Bp).